Here is a 252-residue protein sequence, read N- to C-terminus: DNA-(apurinic or apyrimidinic site) lyase Nei2 (252 aa).

Residue Pro2 is the Schiff-base intermediate with DNA of the active site. The active-site Proton donor is Glu3. Lys51 serves as the catalytic Proton donor (in beta-elimination). Residues 216 to 250 (WVYGRAGEPCRRCGTLIQTDRGGERVTYWCPVCQT) form an FPG-type zinc finger. Zn(2+) is bound by residues Cys225, Cys228, Cys245, and Cys248.

Belongs to the FPG family. Monomer. It depends on Zn(2+) as a cofactor.

The enzyme catalyses 2'-deoxyribonucleotide-(2'-deoxyribose 5'-phosphate)-2'-deoxyribonucleotide-DNA = a 3'-end 2'-deoxyribonucleotide-(2,3-dehydro-2,3-deoxyribose 5'-phosphate)-DNA + a 5'-end 5'-phospho-2'-deoxyribonucleoside-DNA + H(+). Functionally, involved in base excision repair of DNA damaged by oxidation or by mutagenic agents. Acts as DNA glycosylase that recognizes and removes damaged bases. In terms of biological role, involved in the repair of psoralen-UVA DNA cross-links. A lyase that cleaves single-stranded (ss)DNA but not double-stranded (ds)DNA with an abasic site. Has 5-hydroxyuracil (5-OH-U) glycosylase activity on ssDNA with 5-OH-U, with 10-fold less activity on dsDNA, but weak to no uracil glycosylase activity. Has weak glycosylase activity on thymine glycol and dihydrothymine residues in ssDNA. Cleaves the DNA backbone by beta-delta elimination to generate a single-strand break at the site of the removed base with both 3'- and 5'-phosphates. The protein is DNA-(apurinic or apyrimidinic site) lyase Nei2 of Mycolicibacterium smegmatis (strain ATCC 700084 / mc(2)155) (Mycobacterium smegmatis).